The following is a 416-amino-acid chain: Squamosa promoter-binding-like protein 8 (416 aa).

Residues 11 to 53 (SSCDDFGYNATPPPPPSLLPIMDQDGGGGSIQRDHHHHHNHQQ) are disordered. The SBP-type zinc-finger motif lies at 182 to 260 (PPRCQAEGCK…ADHNRRRRKS (79 aa)). Zn(2+) contacts are provided by Cys185, Cys190, Cys207, His210, Cys227, Cys230, His234, and Cys246. The short motif at 243 to 259 (KKSCRKRLADHNRRRRK) is the Bipartite nuclear localization signal element. Residues 250-299 (LADHNRRRRKSKPSDGEHSGEKRRAQANKSAATKDKAGSSSKNAGIGDGF) are disordered. The segment covering 261 to 273 (KPSDGEHSGEKRR) has biased composition (basic and acidic residues).

In terms of tissue distribution, expressed in stems, leaf sheaths, and young panicles.

The protein localises to the nucleus. Functionally, probable transcription factor that plays an important role in building the laminar joint between leaf blade and leaf sheath boundary, thereby controlling ligule and auricle development. This is Squamosa promoter-binding-like protein 8 (SPL8) from Oryza sativa subsp. indica (Rice).